A 156-amino-acid polypeptide reads, in one-letter code: Oleosin Zm-I (156 aa).

Residues 1–30 (MADHHRGATGGGGGYGDLQRGGGMHGEAQQ) are disordered. Residue alanine 2 is modified to N-acetylalanine. The tract at residues 2 to 42 (ADHHRGATGGGGGYGDLQRGGGMHGEAQQQQKQGAMMTALK) is polar. Positions 8 to 25 (ATGGGGGYGDLQRGGGMH) are enriched in gly residues. The interval 43-114 (AATAATFGGS…AALSVFSWMY (72 aa)) is hydrophobic. Helical transmembrane passes span 51–71 (GSML…LTVA) and 95–115 (GFVT…WMYK).

This sequence belongs to the oleosin family. Post-translationally, the N-terminus is blocked.

It is found in the lipid droplet. The protein resides in the membrane. Functionally, may have a structural role to stabilize the lipid body during desiccation of the seed by preventing coalescence of the oil. Probably interacts with both lipid and phospholipid moieties of lipid bodies. May also provide recognition signals for specific lipase anchorage in lipolysis during seedling growth. The sequence is that of Oleosin Zm-I (OLE16) from Zea mays (Maize).